A 429-amino-acid polypeptide reads, in one-letter code: Glutamate-1-semialdehyde 2,1-aminomutase 2 (429 aa).

Lys-267 bears the N6-(pyridoxal phosphate)lysine mark.

It belongs to the class-III pyridoxal-phosphate-dependent aminotransferase family. HemL subfamily. Homodimer. It depends on pyridoxal 5'-phosphate as a cofactor.

The protein resides in the cytoplasm. It carries out the reaction (S)-4-amino-5-oxopentanoate = 5-aminolevulinate. Its pathway is porphyrin-containing compound metabolism; protoporphyrin-IX biosynthesis; 5-aminolevulinate from L-glutamyl-tRNA(Glu): step 2/2. This Bacillus subtilis (strain 168) protein is Glutamate-1-semialdehyde 2,1-aminomutase 2 (gsaB).